Reading from the N-terminus, the 473-residue chain is Ras-GEF domain-containing family member 1B (473 aa).

The region spanning 34–161 (HDNNLLSGSL…NVQQMMQCLI (128 aa)) is the N-terminal Ras-GEF domain. Residues 205–453 (DPYTLAQQLT…YLASYESEGP (249 aa)) form the Ras-GEF domain.

In terms of assembly, interacts with CCDC124 during cytokinesis. Interacts with Ras family proteins. Constitutively expressed in brain, intestine and testis. Low constitutive expression, if any, in heart, lung, lymph nodes and thymus. Up-regulated in heart, kidney, liver, lymph nodes, spleen and thymus at day 20 after infection with Trypanosoma cruzi. Not detected in muscle.

It localises to the early endosome. The protein resides in the late endosome. It is found in the midbody. Functionally, guanine nucleotide exchange factor (GEF) with specificity for RAP2A, it doesn't seems to activate other Ras family proteins (in vitro). The polypeptide is Ras-GEF domain-containing family member 1B (Rasgef1b) (Mus musculus (Mouse)).